The primary structure comprises 323 residues: MASIWVGKRGTIRDYAGFNPSVDAEAIRKAIRGIGTDEKTLISILTERTNAQRLLIAKEYQALCGKELKDDLKGDLSGHFKHLMVALVTPPAVFDAKQLKKSMKGMGTNEDALIEILTTRTSKQMQEIGHAYYTAYKKSLGDEISSETSGDFRKALLILANGRRDESLKVDEQLARKDAQILYNAGEKRWGTDEDAFTNILCLRSFPQLKLTFDEYRNISQKDIEDSIKGELSGHFEDLLLAIVRCARNTPAFLAERLYRALKGAGTDEFTLNRIMVSRSEIDLLDIRAEFKKLSGYSLYSAIKSDTSGDYEITLLKICGGDD.

An N-acetylalanine modification is found at A2. 4 Annexin repeats span residues 18 to 89 (FNPS…ALVT), 90 to 161 (PPAV…ILAN), 173 to 245 (QLAR…AIVR), and 249 to 320 (NTPA…KICG). At K177 the chain carries N6-acetyllysine. Phosphothreonine is present on T267.

Belongs to the annexin family.

In terms of biological role, inhibitor of phospholipase A2, also possesses anti-coagulant properties. Also cleaves the cyclic bond of inositol 1,2-cyclic phosphate to form inositol 1-phosphate. This chain is Annexin A3 (ANXA3), found in Bos taurus (Bovine).